The sequence spans 842 residues: Protein translocase subunit SecA (842 aa).

Residues glutamine 85, 103-107 (GEGKT), and aspartate 493 contribute to the ATP site. Zn(2+) is bound by residues cysteine 825, cysteine 827, cysteine 836, and histidine 837.

It belongs to the SecA family. In terms of assembly, monomer and homodimer. Part of the essential Sec protein translocation apparatus which comprises SecA, SecYEG and auxiliary proteins SecDF. Other proteins may also be involved. The cofactor is Zn(2+).

It is found in the cell membrane. The protein resides in the cytoplasm. It catalyses the reaction ATP + H2O + cellular proteinSide 1 = ADP + phosphate + cellular proteinSide 2.. Part of the Sec protein translocase complex. Interacts with the SecYEG preprotein conducting channel. Has a central role in coupling the hydrolysis of ATP to the transfer of proteins into and across the cell membrane, serving as an ATP-driven molecular motor driving the stepwise translocation of polypeptide chains across the membrane. The sequence is that of Protein translocase subunit SecA from Streptococcus equi subsp. equi (strain 4047).